Here is a 154-residue protein sequence, read N- to C-terminus: PTTG1IP family member 2 (154 aa).

An N-terminal signal peptide occupies residues 1–26; it reads MCWLRAWGQILLPVFLSLFLIQLLIS. The Extracellular portion of the chain corresponds to 27-97; that stretch reads FSENGFIHSP…SIYWLNCKVD (71 aa). A helical transmembrane segment spans residues 98–118; that stretch reads MFGIMMLLLIAVLITGFVWYC. The Cytoplasmic portion of the chain corresponds to 119–154; the sequence is CAYHFYLQDLNRNRVYFYGRRETVPIHDRSATVYDE.

It is found in the membrane. In Homo sapiens (Human), this protein is PTTG1IP family member 2.